A 272-amino-acid chain; its full sequence is MKRTAFFISDGTGITAETLGQSLLAQFESIPFNKFTRPYIDSPDKARVMVQQINAAAERDGVRPIIFDTIVNQDIREILATSNGFMIDIFSSFLSPLEQELIAHSSYSVGKSHSIGGNSNYMERIEAVNFALDNDDGARTHYYDKADLILVGVSRCGKTPTCLYMAMQFGIRAANYPLTEDDMERLQLPAVLKKHHSKLFGLTIDPDRLTAIRHERKPNSRYSSFAQCEFEVREVESLFRRENIPNINSTHFSVEEISAKILVEKGVERRFK.

Position 152–159 (152–159 (GVSRCGKT)) interacts with ADP.

Belongs to the pyruvate, phosphate/water dikinase regulatory protein family. PSRP subfamily.

The catalysed reaction is [pyruvate, water dikinase] + ADP = [pyruvate, water dikinase]-phosphate + AMP + H(+). It carries out the reaction [pyruvate, water dikinase]-phosphate + phosphate + H(+) = [pyruvate, water dikinase] + diphosphate. In terms of biological role, bifunctional serine/threonine kinase and phosphorylase involved in the regulation of the phosphoenolpyruvate synthase (PEPS) by catalyzing its phosphorylation/dephosphorylation. The polypeptide is Putative phosphoenolpyruvate synthase regulatory protein (Pseudomonas putida (strain ATCC 47054 / DSM 6125 / CFBP 8728 / NCIMB 11950 / KT2440)).